The chain runs to 704 residues: Ubiquitin-like modifier-activating enzyme atg7 (704 aa).

A GXGXXG motif motif is present at residues 372–377; it reads GAGTLG. Cys555 functions as the Glycyl thioester intermediate in the catalytic mechanism. Residues 660–699 are homodimerization; that stretch reads ALTEKDYITELSGLAEVQRKAEAAANDVEWDSDEEGMEDE. The interval 682-704 is disordered; it reads AAANDVEWDSDEEGMEDEEPELL. Positions 687–704 are enriched in acidic residues; that stretch reads VEWDSDEEGMEDEEPELL.

This sequence belongs to the ATG7 family. Homodimer. Interacts with ATG8 through a thioester bond between Cys-555 and the C-terminal Gly of ATG8 and with ATG12 through a thioester bond between Cys-555 and the C-terminal Gly of ATG12. Also interacts with ATG3.

It is found in the cytoplasm. The protein localises to the preautophagosomal structure. Its function is as follows. E1-like activating enzyme involved in the 2 ubiquitin-like systems required for cytoplasm to vacuole transport (Cvt) and autophagy. Activates ATG12 for its conjugation with ATG5 and ATG8 for its conjugation with phosphatidylethanolamine. Both systems are needed for the ATG8 association to Cvt vesicles and autophagosomes membranes. Autophagy is essential for maintenance of amino acid levels and protein synthesis under nitrogen starvation. Required for selective autophagic degradation of the nucleus (nucleophagy) as well as for mitophagy which contributes to regulate mitochondrial quantity and quality by eliminating the mitochondria to a basal level to fulfill cellular energy requirements and preventing excess ROS production. Required for normal mycelial growth and conidiogenesis, and regulates sclerotial formation. Plays an essential role in pathogenesis. The chain is Ubiquitin-like modifier-activating enzyme atg7 from Botryotinia fuckeliana (strain T4) (Noble rot fungus).